The following is a 230-amino-acid chain: 5'-methylthioadenosine/S-adenosylhomocysteine nucleosidase (230 aa).

Glu-12 (proton acceptor) is an active-site residue. Residues Gly-78, Met-153, and 174–175 (ME) each bind substrate. Asp-198 serves as the catalytic Proton donor.

It belongs to the PNP/UDP phosphorylase family. MtnN subfamily.

It catalyses the reaction S-adenosyl-L-homocysteine + H2O = S-(5-deoxy-D-ribos-5-yl)-L-homocysteine + adenine. The catalysed reaction is S-methyl-5'-thioadenosine + H2O = 5-(methylsulfanyl)-D-ribose + adenine. The enzyme catalyses 5'-deoxyadenosine + H2O = 5-deoxy-D-ribose + adenine. It participates in amino-acid biosynthesis; L-methionine biosynthesis via salvage pathway; S-methyl-5-thio-alpha-D-ribose 1-phosphate from S-methyl-5'-thioadenosine (hydrolase route): step 1/2. In terms of biological role, catalyzes the irreversible cleavage of the glycosidic bond in both 5'-methylthioadenosine (MTA) and S-adenosylhomocysteine (SAH/AdoHcy) to adenine and the corresponding thioribose, 5'-methylthioribose and S-ribosylhomocysteine, respectively. Also cleaves 5'-deoxyadenosine, a toxic by-product of radical S-adenosylmethionine (SAM) enzymes, into 5-deoxyribose and adenine. The chain is 5'-methylthioadenosine/S-adenosylhomocysteine nucleosidase from Tolumonas auensis (strain DSM 9187 / NBRC 110442 / TA 4).